Reading from the N-terminus, the 416-residue chain is Homeobox even-skipped homolog protein 1 (416 aa).

Disordered stretches follow at residues 30–120 (AVSS…SDFY) and 138–178 (YQHS…LACS). A compositionally biased stretch (low complexity) spans 72–82 (GLAGSAAGLGA). Residues 102–114 (DSLSGQGQPSSSD) are compositionally biased toward polar residues. Positions 183–242 (MRRYRTAFTREQIARLEKEFYRENYVSRPRRCELAAALNLPETTIKVWFQNRRMKDKRQR) form a DNA-binding region, homeobox.

It belongs to the even-skipped homeobox family.

It is found in the nucleus. Functionally, may play a role in the specification of neuronal cell types. May play a role in the dorsoventral specification of mesodermal cell fate. The chain is Homeobox even-skipped homolog protein 1 (Evx1) from Mus musculus (Mouse).